Consider the following 157-residue polypeptide: Ribosome maturation factor RimP (157 aa).

This sequence belongs to the RimP family.

It localises to the cytoplasm. Its function is as follows. Required for maturation of 30S ribosomal subunits. The polypeptide is Ribosome maturation factor RimP (Petrotoga mobilis (strain DSM 10674 / SJ95)).